A 339-amino-acid polypeptide reads, in one-letter code: DNA-directed RNA polymerase subunit alpha (339 aa).

Residues 1 to 235 are alpha N-terminal domain (alpha-NTD); the sequence is MVIQKNWQEL…DQLQIFVNFE (235 aa). The tract at residues 251–339 is alpha C-terminal domain (alpha-CTD); the sequence is FNPALLKKVD…DLAKRFEEHY (89 aa).

The protein belongs to the RNA polymerase alpha chain family. Homodimer. The RNAP catalytic core consists of 2 alpha, 1 beta, 1 beta' and 1 omega subunit. When a sigma factor is associated with the core the holoenzyme is formed, which can initiate transcription.

The catalysed reaction is RNA(n) + a ribonucleoside 5'-triphosphate = RNA(n+1) + diphosphate. Its function is as follows. DNA-dependent RNA polymerase catalyzes the transcription of DNA into RNA using the four ribonucleoside triphosphates as substrates. The chain is DNA-directed RNA polymerase subunit alpha from Methylobacterium sp. (strain 4-46).